The primary structure comprises 391 residues: Histidinol-phosphate aminotransferase (391 aa).

The residue at position 248 (Lys248) is an N6-(pyridoxal phosphate)lysine.

It belongs to the class-II pyridoxal-phosphate-dependent aminotransferase family. Histidinol-phosphate aminotransferase subfamily. Homodimer. Requires pyridoxal 5'-phosphate as cofactor.

It catalyses the reaction L-histidinol phosphate + 2-oxoglutarate = 3-(imidazol-4-yl)-2-oxopropyl phosphate + L-glutamate. It participates in amino-acid biosynthesis; L-histidine biosynthesis; L-histidine from 5-phospho-alpha-D-ribose 1-diphosphate: step 7/9. The chain is Histidinol-phosphate aminotransferase from Shewanella oneidensis (strain ATCC 700550 / JCM 31522 / CIP 106686 / LMG 19005 / NCIMB 14063 / MR-1).